A 705-amino-acid chain; its full sequence is Voltage-dependent calcium channel beta subunit-associated regulatory protein (705 aa).

Residues 1-45 (MQPTATMATAATTTTTTTATVALTTSWDNATGRPTAEPDPILDNY) lie on the Extracellular side of the membrane. N-linked (GlcNAc...) asparagine glycosylation occurs at asparagine 29. A helical; Signal-anchor for type III membrane protein membrane pass occupies residues 46–66 (VLLVVVMSLFVGGTLVVLSGV). At 67 to 705 (LLLCKRCWDV…APTSPDHSPA (639 aa)) the chain is on the cytoplasmic side. Disordered stretches follow at residues 91 to 113 (TTTY…EDPE) and 212 to 284 (GKAL…GSGA). A compositionally biased stretch (polar residues) spans 245–254 (PSASSDSGEG). The segment covering 267–284 (GGPGAAAGPGEAGPGSGA) has biased composition (gly residues). Serine 299 and serine 304 each carry phosphoserine. 4 disordered regions span residues 316-353 (PSQR…DAPQ), 369-436 (FPHP…SYRD), 448-540 (AAAS…RRDY), and 559-655 (HFDD…CPGS). A compositionally biased stretch (acidic residues) spans 344 to 353 (TEQEEGDAPQ). Pro residues predominate over residues 371–382 (HPRPFLASPPPA). Positions 383–397 (LGRLEAAEAAGGASP) are enriched in low complexity. Residues 479-488 (AFPPPSPPAP) show a composition bias toward pro residues. Residues 489–499 (RPKDGEARRLL) are compositionally biased toward basic and acidic residues. 2 positions are modified to phosphoserine: serine 507 and serine 528. A compositionally biased stretch (basic residues) spans 567–585 (ARHRARAHPHARKQWQRGR). Residues 591 to 614 (GARAAPALAGTPAPPAGAARPARA) show a composition bias toward low complexity. Serine 621 carries the phosphoserine modification. Phosphothreonine is present on threonine 698. Serine 699 and serine 703 each carry phosphoserine.

Interacts with voltage-dependent calcium channels CACNB1, CACNB2, CACNB3 and CACNB4 beta subunits; prevents their interaction with the CACNA1C alpha subunit thereby negatively regulating the activity of the corresponding calcium channels.

It localises to the cytoplasmic vesicle. The protein resides in the secretory vesicle. The protein localises to the synaptic vesicle membrane. It is found in the cell membrane. Its subcellular location is the cell projection. It localises to the growth cone. In terms of biological role, negatively regulates voltage-gated calcium channels by preventing the interaction between their alpha and beta subunits. Thereby, negatively regulates calcium channels activity at the plasma membrane and indirectly inhibits calcium-regulated exocytosis. This Homo sapiens (Human) protein is Voltage-dependent calcium channel beta subunit-associated regulatory protein.